Consider the following 119-residue polypeptide: Large ribosomal subunit protein bL20 (119 aa).

It belongs to the bacterial ribosomal protein bL20 family.

Its function is as follows. Binds directly to 23S ribosomal RNA and is necessary for the in vitro assembly process of the 50S ribosomal subunit. It is not involved in the protein synthesizing functions of that subunit. The chain is Large ribosomal subunit protein bL20 from Geobacillus kaustophilus (strain HTA426).